We begin with the raw amino-acid sequence, 1044 residues long: Integrin alpha-8 (1044 aa).

A signal peptide spans 1–23 (MPRRQPPRPLLLLSALLCAPASA). Residues 24 to 991 (FNLDEEKLTV…WSTPNVSFVI (968 aa)) are Extracellular-facing. FG-GAP repeat units follow at residues 28–90 (EEKL…RCRQ), 104–165 (NGTR…AYAE), 170–222 (RNSN…ITNY), 236–288 (QTGV…SSDL), 289–354 (TFIQ…FLFR), 355–413 (DPQI…GLKT), and 417–480 (QVLN…LNPM). N-linked (GlcNAc...) asparagine glycosylation occurs at Asn66. Cys81 and Cys88 form a disulfide bridge. Asn104 is a glycosylation site (N-linked (GlcNAc...) asparagine). Cys132 and Cys153 are oxidised to a cystine. Residue Asn159 is glycosylated (N-linked (GlcNAc...) asparagine). An intrachain disulfide couples Cys169 to Cys182. N-linked (GlcNAc...) asparagine glycosylation occurs at Asn221. Ca(2+) is bound by residues Glu257, Thr259, Asp261, and Glu265. N-linked (GlcNAc...) asparagine glycosylation is found at Asn284 and Asn293. Ca(2+)-binding residues include Asp311, Asn313, Asp315, Leu317, Asp319, Asp377, Asn379, Asp381, Tyr383, and Asp385. Residues 437 to 439 (RGD) carry the Cell attachment site motif. The Ca(2+) site is built by Asp441, Asp443, Asn445, Tyr447, and Asp449. Asn486 carries N-linked (GlcNAc...) asparagine glycosylation. 2 disulfides stabilise this stretch: Cys489–Cys500 and Cys506–Cys562. A glycan (N-linked (GlcNAc...) asparagine) is linked at Asn587. 2 cysteine pairs are disulfide-bonded: Cys623/Cys629 and Cys695/Cys708. Residues Asn701, Asn719, Asn751, Asn762, Asn818, Asn877, and Asn904 are each glycosylated (N-linked (GlcNAc...) asparagine). Intrachain disulfides connect Cys849–Cys905 and Cys910–Cys915. 2 N-linked (GlcNAc...) asparagine glycosylation sites follow: Asn952 and Asn986. Residues 992-1015 (PLWVIILAIMLGLLVLAVLTLALW) traverse the membrane as a helical segment. Topologically, residues 1016-1044 (KCGFFDRARPPQDDMADREQLTNNKTTDA) are cytoplasmic.

Belongs to the integrin alpha chain family. Heterodimer of an alpha and a beta subunit. The alpha subunit is composed of a heavy and a light chain linked by a disulfide bond. Alpha-8 associates with beta-1. In terms of tissue distribution, prominently expressed on axons and on cells in contact with basal laminae in embryos.

The protein localises to the membrane. The protein resides in the cell membrane. Integrin alpha-8/beta-1 functions in the genesis of kidney and probably of other organs by regulating the recruitment of mesenchymal cells into epithelial structures. It recognizes the sequence R-G-D in a wide array of ligands including TNC, FN1, SPP1, TGFB1, TGFB3 and VTN. NPNT is probably its functional ligand in kidney genesis. Neuronal receptor for TNC it mediates cell-cell interactions and regulates neurite outgrowth of sensory and motor neurons. The protein is Integrin alpha-8 (ITGA8) of Gallus gallus (Chicken).